A 422-amino-acid polypeptide reads, in one-letter code: Glucosylglycerol-phosphate phosphatase (422 aa).

Asp403 acts as the Proton donor in catalysis.

Belongs to the histidine acid phosphatase family. In terms of assembly, monomer. Interacts with GGPS.

It catalyses the reaction 2-O-(alpha-D-glucopyranosyl)-sn-glycerol 3-phosphate + H2O = 2-O-(alpha-D-glucopyranosyl)glycerol + phosphate. Phosphorylates glucosylglycerol-phosphate the precursor of the osmoprotectant glucosylglycerol necessary for salt adaptation of Synechocystis. This is Glucosylglycerol-phosphate phosphatase (stpA) from Synechocystis sp. (strain ATCC 27184 / PCC 6803 / Kazusa).